The chain runs to 338 residues: Methionine aminopeptidase 1D, mitochondrial (338 aa).

Residues 1–47 constitute a mitochondrion transit peptide; the sequence is MAAPCAAQCLYRTGGLRLLQRISRLPHCHKDASLAHQCQFHRSFFWR. His164 is a substrate binding site. The a divalent metal cation site is built by Asp181, Asp192, and His255. Position 262 (His262) interacts with substrate. A divalent metal cation is bound by residues Glu287 and Glu318.

The protein belongs to the peptidase M24A family. Methionine aminopeptidase type 1 subfamily. The cofactor is Co(2+). Zn(2+) is required as a cofactor. Requires Mn(2+) as cofactor. Fe(2+) serves as cofactor.

The protein localises to the mitochondrion. The catalysed reaction is Release of N-terminal amino acids, preferentially methionine, from peptides and arylamides.. Removes the N-terminal methionine from nascent proteins. The N-terminal methionine is often cleaved when the second residue in the primary sequence is small and uncharged (Met-Ala-, Cys, Gly, Pro, Ser, Thr, or Val). Requires deformylation of the N(alpha)-formylated initiator methionine before it can be hydrolyzed. This chain is Methionine aminopeptidase 1D, mitochondrial (metap1d), found in Danio rerio (Zebrafish).